A 436-amino-acid chain; its full sequence is Serine hydroxymethyltransferase (436 aa).

Residues leucine 120 and 124–126 (GHL) each bind (6S)-5,6,7,8-tetrahydrofolate. An N6-(pyridoxal phosphate)lysine modification is found at lysine 229.

Belongs to the SHMT family. As to quaternary structure, homodimer. The cofactor is pyridoxal 5'-phosphate.

Its subcellular location is the cytoplasm. The catalysed reaction is (6R)-5,10-methylene-5,6,7,8-tetrahydrofolate + glycine + H2O = (6S)-5,6,7,8-tetrahydrofolate + L-serine. It participates in one-carbon metabolism; tetrahydrofolate interconversion. It functions in the pathway amino-acid biosynthesis; glycine biosynthesis; glycine from L-serine: step 1/1. Functionally, catalyzes the reversible interconversion of serine and glycine with tetrahydrofolate (THF) serving as the one-carbon carrier. This reaction serves as the major source of one-carbon groups required for the biosynthesis of purines, thymidylate, methionine, and other important biomolecules. Also exhibits THF-independent aldolase activity toward beta-hydroxyamino acids, producing glycine and aldehydes, via a retro-aldol mechanism. The chain is Serine hydroxymethyltransferase from Roseiflexus castenholzii (strain DSM 13941 / HLO8).